The following is a 250-amino-acid chain: 5'/3'-nucleotidase SurE (250 aa).

A divalent metal cation-binding residues include Asp9, Asp10, Ser40, and Asn93.

The protein belongs to the SurE nucleotidase family. It depends on a divalent metal cation as a cofactor.

It is found in the cytoplasm. The catalysed reaction is a ribonucleoside 5'-phosphate + H2O = a ribonucleoside + phosphate. The enzyme catalyses a ribonucleoside 3'-phosphate + H2O = a ribonucleoside + phosphate. It carries out the reaction [phosphate](n) + H2O = [phosphate](n-1) + phosphate + H(+). Nucleotidase with a broad substrate specificity as it can dephosphorylate various ribo- and deoxyribonucleoside 5'-monophosphates and ribonucleoside 3'-monophosphates with highest affinity to 3'-AMP. Also hydrolyzes polyphosphate (exopolyphosphatase activity) with the preference for short-chain-length substrates (P20-25). Might be involved in the regulation of dNTP and NTP pools, and in the turnover of 3'-mononucleotides produced by numerous intracellular RNases (T1, T2, and F) during the degradation of various RNAs. This chain is 5'/3'-nucleotidase SurE, found in Yersinia enterocolitica serotype O:8 / biotype 1B (strain NCTC 13174 / 8081).